Here is a 408-residue protein sequence, read N- to C-terminus: tRNA-specific 2-thiouridylase MnmA (408 aa).

ATP contacts are provided by residues 38 to 45 (GMSGGVDS) and methionine 64. Residues 124–126 (NPD) are interaction with target base in tRNA. Cysteine 129 functions as the Nucleophile in the catalytic mechanism. A disulfide bond links cysteine 129 and cysteine 231. An ATP-binding site is contributed by glycine 153. The segment at 181-183 (KDQ) is interaction with tRNA. Residue cysteine 231 is the Cysteine persulfide intermediate of the active site. Positions 348 to 349 (RY) are interaction with tRNA.

The protein belongs to the MnmA/TRMU family.

It localises to the cytoplasm. It catalyses the reaction S-sulfanyl-L-cysteinyl-[protein] + uridine(34) in tRNA + AH2 + ATP = 2-thiouridine(34) in tRNA + L-cysteinyl-[protein] + A + AMP + diphosphate + H(+). Catalyzes the 2-thiolation of uridine at the wobble position (U34) of tRNA, leading to the formation of s(2)U34. This is tRNA-specific 2-thiouridylase MnmA from Psychrobacter arcticus (strain DSM 17307 / VKM B-2377 / 273-4).